Here is a 185-residue protein sequence, read N- to C-terminus: Ribosome-recycling factor (185 aa).

It belongs to the RRF family.

The protein resides in the cytoplasm. Responsible for the release of ribosomes from messenger RNA at the termination of protein biosynthesis. May increase the efficiency of translation by recycling ribosomes from one round of translation to another. The chain is Ribosome-recycling factor from Mycobacteroides abscessus (strain ATCC 19977 / DSM 44196 / CCUG 20993 / CIP 104536 / JCM 13569 / NCTC 13031 / TMC 1543 / L948) (Mycobacterium abscessus).